Reading from the N-terminus, the 263-residue chain is 3-deoxy-manno-octulosonate cytidylyltransferase 2 (263 aa).

It belongs to the KdsB family.

Its subcellular location is the cytoplasm. It catalyses the reaction 3-deoxy-alpha-D-manno-oct-2-ulosonate + CTP = CMP-3-deoxy-beta-D-manno-octulosonate + diphosphate. It participates in nucleotide-sugar biosynthesis; CMP-3-deoxy-D-manno-octulosonate biosynthesis; CMP-3-deoxy-D-manno-octulosonate from 3-deoxy-D-manno-octulosonate and CTP: step 1/1. The protein operates within bacterial outer membrane biogenesis; lipopolysaccharide biosynthesis. In terms of biological role, activates KDO (a required 8-carbon sugar) for incorporation into bacterial lipopolysaccharide in Gram-negative bacteria. This is 3-deoxy-manno-octulosonate cytidylyltransferase 2 from Paraburkholderia phytofirmans (strain DSM 17436 / LMG 22146 / PsJN) (Burkholderia phytofirmans).